Here is a 705-residue protein sequence, read N- to C-terminus: Voltage-dependent calcium channel beta subunit-associated regulatory protein (705 aa).

The Extracellular segment spans residues 1–45 (MQPTATMATAATTTTTTTATVALTTSWDNATGRPTAEPDPILDNY). Asparagine 29 carries an N-linked (GlcNAc...) asparagine glycan. Residues 46-66 (VLLVVVMSLFVGGTLVVLSGV) traverse the membrane as a helical; Signal-anchor for type III membrane protein segment. Residues 67–705 (LLLCKRCWDV…APTSPDHSPA (639 aa)) lie on the Cytoplasmic side of the membrane. Disordered stretches follow at residues 91 to 113 (TTTY…EDPE) and 212 to 284 (GKAL…GSGA). Residues 245 to 254 (PSASSDSGEG) are compositionally biased toward polar residues. Over residues 267–284 (GGPGAAAGPGEAGPGSGA) the composition is skewed to gly residues. Residues serine 299 and serine 304 each carry the phosphoserine modification. 4 disordered regions span residues 316 to 353 (PSQR…DAPQ), 369 to 436 (FPHP…SYRD), 448 to 540 (AAAS…RRDY), and 559 to 655 (HFDD…CPGS). Over residues 344–353 (TEQEEGDAPQ) the composition is skewed to acidic residues. Over residues 371 to 382 (HPRPFLASPPPA) the composition is skewed to pro residues. Residues 383-397 (LGRLEAAEAAGGASP) are compositionally biased toward low complexity. Over residues 479–488 (AFPPPSPPAP) the composition is skewed to pro residues. Over residues 489 to 499 (RPKDGEARRLL) the composition is skewed to basic and acidic residues. A phosphoserine mark is found at serine 507 and serine 528. The segment covering 567 to 585 (ARHRARAHPHARKQWQRGR) has biased composition (basic residues). Low complexity predominate over residues 591 to 614 (GARAAPALAGTPAPPAGAARPARA). The residue at position 621 (serine 621) is a Phosphoserine. Threonine 698 is modified (phosphothreonine). Residues serine 699 and serine 703 each carry the phosphoserine modification.

Interacts with voltage-dependent calcium channels CACNB1, CACNB2, CACNB3 and CACNB4 beta subunits; prevents their interaction with the CACNA1C alpha subunit thereby negatively regulating the activity of the corresponding calcium channels.

Its subcellular location is the cytoplasmic vesicle. The protein localises to the secretory vesicle. The protein resides in the synaptic vesicle membrane. It is found in the cell membrane. It localises to the cell projection. Its subcellular location is the growth cone. Negatively regulates voltage-gated calcium channels by preventing the interaction between their alpha and beta subunits. Thereby, negatively regulates calcium channels activity at the plasma membrane and indirectly inhibits calcium-regulated exocytosis. This Homo sapiens (Human) protein is Voltage-dependent calcium channel beta subunit-associated regulatory protein.